Reading from the N-terminus, the 268-residue chain is Mediator of RNA polymerase II transcription subunit 8-A (268 aa).

2 coiled-coil regions span residues 1 to 26 (MQRE…KNSL) and 117 to 160 (VEEL…EERE). Residues 190-268 (GLSNRRPPGQ…KSASMHPYQR (79 aa)) are disordered. Over residues 223 to 246 (VPMSLQSNQQQQHMAGVSMSQGNQ) the composition is skewed to polar residues.

The protein belongs to the Mediator complex subunit 8 family. In terms of assembly, component of the Mediator complex. May be part of a multisubunit E3 ubiquitin-protein ligase complex.

The protein resides in the nucleus. Its pathway is protein modification; protein ubiquitination. Functionally, component of the Mediator complex, a coactivator involved in the regulated transcription of nearly all RNA polymerase II-dependent genes. Mediator functions as a bridge to convey information from gene-specific regulatory proteins to the basal RNA polymerase II transcription machinery. Mediator is recruited to promoters by direct interactions with regulatory proteins and serves as a scaffold for the assembly of a functional preinitiation complex with RNA polymerase II and the general transcription factors. May play a role as a target recruitment subunit in E3 ubiquitin-protein ligase complexes and thus in ubiquitination and subsequent proteasomal degradation of target proteins. The sequence is that of Mediator of RNA polymerase II transcription subunit 8-A (med8-a) from Xenopus laevis (African clawed frog).